A 291-amino-acid chain; its full sequence is E3 ubiquitin-protein ligase RZFP34 (291 aa).

The CHY-type zinc finger occupies 20 to 96; it reads IGSGHYGCSH…VQQNCSNCGV (77 aa). Zn(2+) contacts are provided by Cys-27, His-29, Cys-40, Cys-41, Cys-47, Cys-50, His-51, His-66, Cys-78, Cys-81, Cys-91, Cys-94, Cys-103, Cys-106, His-119, Cys-120, Cys-123, Cys-126, His-136, Cys-137, Cys-140, Cys-143, His-152, and Cys-154. The CTCHY-type zinc-finger motif lies at 98-162; that stretch reads MGKYFCSKCK…QCVEGAMHHN (65 aa). The RING-type; atypical zinc finger occupies 163–206; that stretch reads CPVCFEYLFDSTRDITVLRCGHTMHLECTKDMGLHNRYTCPVCS. Phosphoserine is present on Ser-173. Thr-178 bears the Phosphothreonine mark. Ser-208 bears the Phosphoserine mark. The segment at 271-291 is disordered; the sequence is QRGSDSHSCSSGMPQVVGSTG.

As to quaternary structure, interacts with SRK2D/2SNRK2.2, SRK2I/SNRK2.3 and SRK2E/SNRK2.6. Post-translationally, phosphorylated at Ser-173, Thr-178 and Ser-208 by SRK2E/SNRK2.6 in response to abscisic acid (ABA). Phosphorylation activates its E3 ubiquitin-protein ligase activity. As to expression, expressed in roots, leaves, and anthers and stigma of open flowers.

It is found in the nucleus. The protein localises to the cytoplasm. It localises to the endoplasmic reticulum. The catalysed reaction is S-ubiquitinyl-[E2 ubiquitin-conjugating enzyme]-L-cysteine + [acceptor protein]-L-lysine = [E2 ubiquitin-conjugating enzyme]-L-cysteine + N(6)-ubiquitinyl-[acceptor protein]-L-lysine.. Its pathway is protein modification; protein ubiquitination. In terms of biological role, possesses E3 ubiquitin-protein ligase activity in vitro. Mediates mainly 'Lys-48'-linked polyubiquitination. Promotes abscisic acid (ABA)-induced stomatal closure, reactive oxygen species (ROS) production and drought tolerance. Involved in the regulation of stomatal aperture. This chain is E3 ubiquitin-protein ligase RZFP34, found in Arabidopsis thaliana (Mouse-ear cress).